The following is a 492-amino-acid chain: Aspartyl/glutamyl-tRNA(Asn/Gln) amidotransferase subunit B (492 aa).

This sequence belongs to the GatB/GatE family. GatB subfamily. Heterotrimer of A, B and C subunits.

The enzyme catalyses L-glutamyl-tRNA(Gln) + L-glutamine + ATP + H2O = L-glutaminyl-tRNA(Gln) + L-glutamate + ADP + phosphate + H(+). It catalyses the reaction L-aspartyl-tRNA(Asn) + L-glutamine + ATP + H2O = L-asparaginyl-tRNA(Asn) + L-glutamate + ADP + phosphate + 2 H(+). Its function is as follows. Allows the formation of correctly charged Asn-tRNA(Asn) or Gln-tRNA(Gln) through the transamidation of misacylated Asp-tRNA(Asn) or Glu-tRNA(Gln) in organisms which lack either or both of asparaginyl-tRNA or glutaminyl-tRNA synthetases. The reaction takes place in the presence of glutamine and ATP through an activated phospho-Asp-tRNA(Asn) or phospho-Glu-tRNA(Gln). The protein is Aspartyl/glutamyl-tRNA(Asn/Gln) amidotransferase subunit B of Bradyrhizobium diazoefficiens (strain JCM 10833 / BCRC 13528 / IAM 13628 / NBRC 14792 / USDA 110).